The sequence spans 507 residues: Protein disulfide-isomerase (507 aa).

A signal peptide spans 1-20 (MASMVSFCFLLLFLAFFASS). One can recognise a Thioredoxin 1 domain in the interval 21–144 (FNEIYAEESE…IVDYLKKQSG (124 aa)). Active-site nucleophile residues include cysteine 62 and cysteine 65. An intrachain disulfide couples cysteine 62 to cysteine 65. Residues asparagine 181 and asparagine 278 are each glycosylated (N-linked (GlcNAc...) asparagine). The Thioredoxin 2 domain maps to 365–485 (YRKSEPIPEH…FIEFIEKNRE (121 aa)). Residues cysteine 407 and cysteine 410 each act as nucleophile in the active site. Cysteine 407 and cysteine 410 are disulfide-bonded. The disordered stretch occupies residues 484–507 (REKSSKKESIVKDDQTDSETKAEL). Residues 504 to 507 (KAEL) carry the Prevents secretion from ER motif.

The protein belongs to the protein disulfide isomerase family.

The protein localises to the endoplasmic reticulum lumen. It catalyses the reaction Catalyzes the rearrangement of -S-S- bonds in proteins.. Functionally, participates in the folding of proteins containing disulfide bonds, may be involved in glycosylation, prolyl hydroxylation and triglyceride transfer. This is Protein disulfide-isomerase (PDI) from Datisca glomerata (Durango root).